A 231-amino-acid polypeptide reads, in one-letter code: tRNA (guanine-N(1)-)-methyltransferase (231 aa).

Residues Gly-111 and 131-136 (LGNYVL) each bind S-adenosyl-L-methionine.

This sequence belongs to the RNA methyltransferase TrmD family. Homodimer.

The protein localises to the cytoplasm. The catalysed reaction is guanosine(37) in tRNA + S-adenosyl-L-methionine = N(1)-methylguanosine(37) in tRNA + S-adenosyl-L-homocysteine + H(+). Specifically methylates guanosine-37 in various tRNAs. This is tRNA (guanine-N(1)-)-methyltransferase from Leptospira interrogans serogroup Icterohaemorrhagiae serovar copenhageni (strain Fiocruz L1-130).